The sequence spans 69 residues: Large ribosomal subunit protein uL29 (69 aa).

The protein belongs to the universal ribosomal protein uL29 family.

The polypeptide is Large ribosomal subunit protein uL29 (Treponema denticola (strain ATCC 35405 / DSM 14222 / CIP 103919 / JCM 8153 / KCTC 15104)).